Here is a 219-residue protein sequence, read N- to C-terminus: Guanylate kinase (219 aa).

The Guanylate kinase-like domain maps to 15–194 (GLMLVISSPS…AFSSVRAIVE (180 aa)). 22–29 (SPSGAGKS) is a binding site for ATP.

It belongs to the guanylate kinase family.

It localises to the cytoplasm. The catalysed reaction is GMP + ATP = GDP + ADP. Functionally, essential for recycling GMP and indirectly, cGMP. The chain is Guanylate kinase from Rhizobium meliloti (strain 1021) (Ensifer meliloti).